A 377-amino-acid polypeptide reads, in one-letter code: Nitric oxide reductase FlRd-NAD(+) reductase (377 aa).

Belongs to the FAD-dependent oxidoreductase family. Requires FAD as cofactor.

It is found in the cytoplasm. The catalysed reaction is 2 reduced [nitric oxide reductase rubredoxin domain] + NAD(+) + H(+) = 2 oxidized [nitric oxide reductase rubredoxin domain] + NADH. It functions in the pathway nitrogen metabolism; nitric oxide reduction. In terms of biological role, one of at least two accessory proteins for anaerobic nitric oxide (NO) reductase. Reduces the rubredoxin moiety of NO reductase. The chain is Nitric oxide reductase FlRd-NAD(+) reductase from Escherichia coli O9:H4 (strain HS).